Reading from the N-terminus, the 510-residue chain is MSDASAETAIRPTRAENFSEWYLEVIKAADLAESSSVRGCMVIKPWGYALWEHVQRVLDGMFKATGHVNAYFPLFIPLSLLEKEAAHVEGFAKECAVVTHHRLEARDGKLVPVGELEEPLIVRPTSETIIGESFARWVQSYRDLPLLINQWANVVRWEMRTRMFLRTAEFLWQEGHTAHATEPEAIDETMQMLGIYARFAEEWMALPVVQGEKTESERFPGAVRTYCIEAMMQDRKALQAGTSHFLGQNFAKASGIQFQDEKGTLTHAWTTSWGLSTRMIGAMIMTHGDDDGMVCPPRLAPQQVVIIPVIQKPEVREQVLAWCTALKRELEAQTYAGAPVRVHLDARDLQGAKKSWEWIKKGTPVRLEVGPRDIEKGAVFMGRRDRKPREKQSVPRAELVAGVGALLQEIQDALLERARTMRAAHTRVIDTKDEFYAYFTPPPTRRPNDPTPIHGGFALAHFAGDPAVEARIKEDLGVTVRCIPLEPGEPGTCAFTGQPSPKRVVWAKSY.

This sequence belongs to the class-II aminoacyl-tRNA synthetase family. ProS type 3 subfamily. As to quaternary structure, homodimer.

Its subcellular location is the cytoplasm. The catalysed reaction is tRNA(Pro) + L-proline + ATP = L-prolyl-tRNA(Pro) + AMP + diphosphate. Catalyzes the attachment of proline to tRNA(Pro) in a two-step reaction: proline is first activated by ATP to form Pro-AMP and then transferred to the acceptor end of tRNA(Pro). In Anaeromyxobacter dehalogenans (strain 2CP-C), this protein is Proline--tRNA ligase 2.